The chain runs to 318 residues: Cyclic AMP receptor-like protein F (318 aa).

At M1–D3 the chain is on the extracellular side. A helical membrane pass occupies residues I4–I24. The Cytoplasmic segment spans residues T25–N38. The chain crosses the membrane as a helical span at residues F39–I59. Residues F60–S83 are Extracellular-facing. An intrachain disulfide couples C81 to C177. The chain crosses the membrane as a helical span at residues L84–V104. Over K105–T145 the chain is Cytoplasmic. Residues L146 to I166 traverse the membrane as a helical segment. Residues S167–R187 lie on the Extracellular side of the membrane. The chain crosses the membrane as a helical span at residues F188 to I208. Over L209 to E234 the chain is Cytoplasmic. Residues F235–V255 traverse the membrane as a helical segment. The Extracellular portion of the chain corresponds to L256–T267. Residues F268–W288 traverse the membrane as a helical segment. At A289 to K318 the chain is on the cytoplasmic side.

This sequence belongs to the G-protein coupled receptor 5 family.

Its subcellular location is the membrane. Functionally, receptor for cAMP. This chain is Cyclic AMP receptor-like protein F (crlF), found in Dictyostelium discoideum (Social amoeba).